A 340-amino-acid polypeptide reads, in one-letter code: UDP-3-O-acylglucosamine N-acyltransferase (340 aa).

The active-site Proton acceptor is the His240.

Belongs to the transferase hexapeptide repeat family. LpxD subfamily. In terms of assembly, homotrimer.

It catalyses the reaction a UDP-3-O-[(3R)-3-hydroxyacyl]-alpha-D-glucosamine + a (3R)-hydroxyacyl-[ACP] = a UDP-2-N,3-O-bis[(3R)-3-hydroxyacyl]-alpha-D-glucosamine + holo-[ACP] + H(+). It participates in bacterial outer membrane biogenesis; LPS lipid A biosynthesis. Its function is as follows. Catalyzes the N-acylation of UDP-3-O-acylglucosamine using 3-hydroxyacyl-ACP as the acyl donor. Is involved in the biosynthesis of lipid A, a phosphorylated glycolipid that anchors the lipopolysaccharide to the outer membrane of the cell. The sequence is that of UDP-3-O-acylglucosamine N-acyltransferase from Pseudoalteromonas translucida (strain TAC 125).